Reading from the N-terminus, the 231-residue chain is MNSFNEGVVSPLLSFWRRSLMLAGALLLTACSHNSSLPPFTASGFAEDQGAVRIWRKDSGDNVHLLAVFSPWRSGDTTTREYRWQGDNLTLININVYSKPPVNIRARFDDRGDLSFMQRESDGEKQQLSNDQIDLYRYRADQIRQISDALRQGRVVLRQGRWHAMEQTVTTCEGQTIKPDLDSQAIAHIERRQSRSSVDVSVAWLEAPEGSQLLLVANSDFCRWQPNEKTF.

This is an uncharacterized protein from Escherichia coli (strain K12).